A 355-amino-acid polypeptide reads, in one-letter code: Protein RecA (355 aa).

67-74 (GPESSGKT) lines the ATP pocket. A disordered region spans residues 335–355 (NSLVSDVESEDEGASESNEEF). The segment covering 341–355 (VESEDEGASESNEEF) has biased composition (acidic residues).

This sequence belongs to the RecA family.

It is found in the cytoplasm. Its function is as follows. Can catalyze the hydrolysis of ATP in the presence of single-stranded DNA, the ATP-dependent uptake of single-stranded DNA by duplex DNA, and the ATP-dependent hybridization of homologous single-stranded DNAs. It interacts with LexA causing its activation and leading to its autocatalytic cleavage. The chain is Protein RecA from Sodalis glossinidius.